A 474-amino-acid chain; its full sequence is 3-isopropylmalate dehydratase large subunit (474 aa).

Cys353, Cys413, and Cys416 together coordinate [4Fe-4S] cluster.

It belongs to the aconitase/IPM isomerase family. LeuC type 1 subfamily. In terms of assembly, heterodimer of LeuC and LeuD. [4Fe-4S] cluster is required as a cofactor.

The catalysed reaction is (2R,3S)-3-isopropylmalate = (2S)-2-isopropylmalate. It functions in the pathway amino-acid biosynthesis; L-leucine biosynthesis; L-leucine from 3-methyl-2-oxobutanoate: step 2/4. Functionally, catalyzes the isomerization between 2-isopropylmalate and 3-isopropylmalate, via the formation of 2-isopropylmaleate. This is 3-isopropylmalate dehydratase large subunit from Roseiflexus sp. (strain RS-1).